Consider the following 353-residue polypeptide: Photosystem II protein D1 (353 aa).

Thr-2 is modified (N-acetylthreonine). A Phosphothreonine modification is found at Thr-2. Transmembrane regions (helical) follow at residues 29–46, 118–133, and 142–156; these read YIGW…TATS, HFLL…EWEL, and WIVV…AATA. Chlorophyll a is bound at residue His-118. Tyr-126 is a pheophytin a binding site. [CaMn4O5] cluster is bound by residues Asp-170 and Glu-189. The chain crosses the membrane as a helical span at residues 197–218; sequence FHMLGVAGVFGGSLFSAMHGSL. His-198 is a chlorophyll a binding site. A quinone is bound by residues His-215 and 264–265; that span reads SF. Residue His-215 coordinates Fe cation. Residue His-272 participates in Fe cation binding. A helical transmembrane segment spans residues 274–288; that stretch reads FLAAWPVVGIWFTAL. The [CaMn4O5] cluster site is built by His-332, Glu-333, Asp-342, and Ala-344. Residues 345–353 constitute a propeptide that is removed on maturation; that stretch reads AVDAPSISG.

Belongs to the reaction center PufL/M/PsbA/D family. As to quaternary structure, PSII is composed of 1 copy each of membrane proteins PsbA, PsbB, PsbC, PsbD, PsbE, PsbF, PsbH, PsbI, PsbJ, PsbK, PsbL, PsbM, PsbT, PsbX, PsbY, PsbZ, Psb30/Ycf12, at least 3 peripheral proteins of the oxygen-evolving complex and a large number of cofactors. It forms dimeric complexes. The D1/D2 heterodimer binds P680, chlorophylls that are the primary electron donor of PSII, and subsequent electron acceptors. It shares a non-heme iron and each subunit binds pheophytin, quinone, additional chlorophylls, carotenoids and lipids. D1 provides most of the ligands for the Mn4-Ca-O5 cluster of the oxygen-evolving complex (OEC). There is also a Cl(-1) ion associated with D1 and D2, which is required for oxygen evolution. The PSII complex binds additional chlorophylls, carotenoids and specific lipids. is required as a cofactor. Tyr-161 forms a radical intermediate that is referred to as redox-active TyrZ, YZ or Y-Z. Post-translationally, C-terminally processed by CTPA; processing is essential to allow assembly of the oxygen-evolving complex and thus photosynthetic growth.

Its subcellular location is the plastid. It is found in the chloroplast thylakoid membrane. It carries out the reaction 2 a plastoquinone + 4 hnu + 2 H2O = 2 a plastoquinol + O2. Photosystem II (PSII) is a light-driven water:plastoquinone oxidoreductase that uses light energy to abstract electrons from H(2)O, generating O(2) and a proton gradient subsequently used for ATP formation. It consists of a core antenna complex that captures photons, and an electron transfer chain that converts photonic excitation into a charge separation. The D1/D2 (PsbA/PsbD) reaction center heterodimer binds P680, the primary electron donor of PSII as well as several subsequent electron acceptors. The polypeptide is Photosystem II protein D1 (Vicia faba (Broad bean)).